The sequence spans 38 residues: Kappa-theraphotoxin-Hm2a (38 aa).

3 disulfides stabilise this stretch: cysteine 2/cysteine 16, cysteine 9/cysteine 21, and cysteine 15/cysteine 32. Phenylalanine 38 carries the post-translational modification Phenylalanine amide.

It belongs to the neurotoxin 10 (Hwtx-1) family. 13 (Hntx-13) subfamily. Expressed by the venom gland.

Its subcellular location is the secreted. Its function is as follows. Inhibitor of voltage-gated potassium channels. It specifically inhibits Kv2.1/KCNB1 channels. The protein is Kappa-theraphotoxin-Hm2a of Heteroscodra maculata (Togo starburst tarantula).